A 240-amino-acid polypeptide reads, in one-letter code: Orotidine 5'-phosphate decarboxylase (240 aa).

Substrate-binding positions include Asp19, Lys41, 68 to 77 (DYKYYDIEET), Thr123, Arg184, Gln193, Gly213, and Arg214. Lys70 serves as the catalytic Proton donor.

Belongs to the OMP decarboxylase family. Type 1 subfamily. In terms of assembly, homodimer.

The enzyme catalyses orotidine 5'-phosphate + H(+) = UMP + CO2. The protein operates within pyrimidine metabolism; UMP biosynthesis via de novo pathway; UMP from orotate: step 2/2. Catalyzes the decarboxylation of orotidine 5'-monophosphate (OMP) to uridine 5'-monophosphate (UMP). The chain is Orotidine 5'-phosphate decarboxylase from Nitrobacter winogradskyi (strain ATCC 25391 / DSM 10237 / CIP 104748 / NCIMB 11846 / Nb-255).